Reading from the N-terminus, the 304-residue chain is MTLTPPKKTHLKQLEAESIHIIREVAAEFDNPVMLYSIGKDSAVMLHLAMKAFAPGKPPFPLMHVDTTWKFREMITFRDQMAEKLGMKLLVHTNQEGVEQGIGPFTHGSAKHTDVMKTQALKQALDKYGFDAAFGGARRDEEKSRAKERVYSFRDKFHRWDPKNQRPELWNLYNGKVNKGESIRVFPLSNWTELDIWQYIYLENIDIVPLYYAAERPVVERDGTLIMVDDDRMPLEPGEQPMMKMVRFRTLGCYPLTGAVESEAATLPDIIQEMLLTTTSERQGRVIDHDGAASMEQKKREGYF.

This sequence belongs to the PAPS reductase family. CysD subfamily. Heterodimer composed of CysD, the smaller subunit, and CysN.

It catalyses the reaction sulfate + ATP + H(+) = adenosine 5'-phosphosulfate + diphosphate. It functions in the pathway sulfur metabolism; hydrogen sulfide biosynthesis; sulfite from sulfate: step 1/3. With CysN forms the ATP sulfurylase (ATPS) that catalyzes the adenylation of sulfate producing adenosine 5'-phosphosulfate (APS) and diphosphate, the first enzymatic step in sulfur assimilation pathway. APS synthesis involves the formation of a high-energy phosphoric-sulfuric acid anhydride bond driven by GTP hydrolysis by CysN coupled to ATP hydrolysis by CysD. In Marinobacter nauticus (strain ATCC 700491 / DSM 11845 / VT8) (Marinobacter aquaeolei), this protein is Sulfate adenylyltransferase subunit 2 1.